Consider the following 526-residue polypeptide: Peptide chain release factor 3 (526 aa).

The tr-type G domain maps to 8–277 (GKRRTFAIIS…GLTDWAPAPQ (270 aa)). GTP contacts are provided by residues 17–24 (SHPDAGKT), 85–89 (DTPGH), and 139–142 (NKLD).

It belongs to the TRAFAC class translation factor GTPase superfamily. Classic translation factor GTPase family. PrfC subfamily.

It localises to the cytoplasm. Increases the formation of ribosomal termination complexes and stimulates activities of RF-1 and RF-2. It binds guanine nucleotides and has strong preference for UGA stop codons. It may interact directly with the ribosome. The stimulation of RF-1 and RF-2 is significantly reduced by GTP and GDP, but not by GMP. The sequence is that of Peptide chain release factor 3 from Aliivibrio fischeri (strain ATCC 700601 / ES114) (Vibrio fischeri).